A 377-amino-acid polypeptide reads, in one-letter code: Actin-related protein T2 (377 aa).

The protein belongs to the actin family.

Its subcellular location is the cytoplasm. The protein localises to the cytoskeleton. The chain is Actin-related protein T2 (Actrt2) from Mus musculus (Mouse).